The sequence spans 659 residues: Pseudouridylate synthase 7 homolog (659 aa).

Residue methionine 1 is modified to N-acetylmethionine. Composition is skewed to polar residues over residues 1–10 (MEMTEMTSVS) and 39–54 (CPTTGQDGIENSSLPS). Positions 1–99 (MEMTEMTSVS…EEEEEEAESF (99 aa)) are disordered. Residue serine 10 is modified to Phosphoserine. Over residues 75 to 98 (PSEEEEEEDGLSEEEEEEEEEAES) the composition is skewed to acidic residues. Serine 125 is subject to Phosphoserine. Residue aspartate 292 is the Nucleophile of the active site. The TRUD domain maps to 368 to 578 (GFINYYGMQR…SGAYRKIIIR (211 aa)).

The protein belongs to the pseudouridine synthase TruD family. In terms of assembly, interacts with SIRT1.

The protein localises to the nucleus. The enzyme catalyses a uridine in tRNA = a pseudouridine in tRNA. It carries out the reaction uridine(13) in tRNA = pseudouridine(13) in tRNA. It catalyses the reaction a uridine in mRNA = a pseudouridine in mRNA. In terms of biological role, pseudouridylate synthase that catalyzes pseudouridylation of RNAs. Acts as a regulator of protein synthesis in embryonic stem cells by mediating pseudouridylation of RNA fragments derived from tRNAs (tRFs): pseudouridylated tRFs inhibit translation by targeting the translation initiation complex. Also catalyzes pseudouridylation of mRNAs: mediates pseudouridylation of mRNAs with the consensus sequence 5'-UGUAG-3'. Acts as a regulator of pre-mRNA splicing by mediating pseudouridylation of pre-mRNAs at locations associated with alternatively spliced regions. Pseudouridylation of pre-mRNAs near splice sites directly regulates mRNA splicing and mRNA 3'-end processing. In addition to mRNAs and tRNAs, binds other types of RNAs, such as snRNAs, Y RNAs and vault RNAs, suggesting that it can catalyze pseudouridylation of many RNA types. The polypeptide is Pseudouridylate synthase 7 homolog (Bos taurus (Bovine)).